Consider the following 277-residue polypeptide: NH(3)-dependent NAD(+) synthetase (277 aa).

Residue 36–43 (GLSGGIDS) participates in ATP binding. Residue Asp42 participates in Mg(2+) binding. Arg118 is a deamido-NAD(+) binding site. Residue Thr138 coordinates ATP. Glu143 is a Mg(2+) binding site. The ATP site is built by Lys167 and Ser189.

It belongs to the NAD synthetase family. In terms of assembly, homodimer.

It catalyses the reaction deamido-NAD(+) + NH4(+) + ATP = AMP + diphosphate + NAD(+) + H(+). Its pathway is cofactor biosynthesis; NAD(+) biosynthesis; NAD(+) from deamido-NAD(+) (ammonia route): step 1/1. In terms of biological role, catalyzes the ATP-dependent amidation of deamido-NAD to form NAD. Uses ammonia as a nitrogen source. The chain is NH(3)-dependent NAD(+) synthetase from Pelodictyon phaeoclathratiforme (strain DSM 5477 / BU-1).